A 306-amino-acid polypeptide reads, in one-letter code: Protein YIPF1 (306 aa).

Over 1 to 119 (MAAVDDLQFE…VRLYIRSNPD (119 aa)) the chain is Cytoplasmic. A disordered region spans residues 30 to 63 (IEDPSVSFGHQPRPPGSVGREEDEELLGNNDSDE). The span at 50–63 (EEDEELLGNNDSDE) shows a compositional bias: acidic residues. Residues 120–140 (LYGPFWICATLVFAIAISGNL) form a helical membrane-spanning segment. The Lumenal portion of the chain corresponds to 141–162 (SNFLIHLGEKTYHYVPEFQKVS). The chain crosses the membrane as a helical span at residues 163-183 (IAATVIYAYAWLVPLALWGFL). Topologically, residues 184 to 200 (LWRNSKVMSMVSYSFLE) are cytoplasmic. Residues 201 to 221 (IVCVYGYSLFIYIPTAVLWII) traverse the membrane as a helical segment. Over 222–227 (PQRVVR) the chain is Lumenal. A helical transmembrane segment spans residues 228-248 (WVLVMIALGVSGSVLVMTFWP). Residues 249-256 (AVREDNRR) lie on the Cytoplasmic side of the membrane. The helical transmembrane segment at 257 to 277 (VALATIVTIVLLHVLLSVGCL) threads the bilayer. Over 278–306 (AYFFDAPEMDHLPAAITTPNQTVTAAKSS) the chain is Lumenal. The N-linked (GlcNAc...) asparagine glycan is linked to Asn297.

The protein belongs to the YIP1 family. In terms of assembly, interacts with YIPF6; this interaction may stabilize YIPF1. May also form a ternary complex with YIPF2 and YIPF6.

It is found in the golgi apparatus. It localises to the cis-Golgi network membrane. Its subcellular location is the trans-Golgi network membrane. The protein localises to the late endosome membrane. The polypeptide is Protein YIPF1 (Yipf1) (Mus musculus (Mouse)).